A 397-amino-acid chain; its full sequence is MIPLEKPGSGGSPSAAASGSGPGGLLTEIRTAIRTEPFQDCYSLSPGRELGRGKFAVVRKCIQKDSGKEFAAKFMRKRRKGQDCRMEIIHEIAVLELAQDNPWVINLHEVYETSSEMILVLEYAAGGEISDQCVADRDEAFNEKDVQRLMRQILEGVHFLHTHDVVHLDLKPQNILLTSESPLGDIKIVDFGLSRIVKNSEELREIMGTPEYVAPEILSYDPISMATDMWSIGVLTYVMLTGISPFLGDNKQETFLNISQMNLSYSEEEFDTVSESAVDFIKKLLVKKPEDRATAEECLKHPWLTQSSIQDPVLRVKEALEEANALQKGDSVPEISSATEKPGTEESIVTEELIVVTSYTLGQCRQSEKEKMEQKAISKRFKFEEPLLQEIPGEFIY.

Positions 1-23 (MIPLEKPGSGGSPSAAASGSGPG) are disordered. Serine 9 is modified (phosphoserine). Positions 44–304 (LSPGRELGRG…AEECLKHPWL (261 aa)) constitute a Protein kinase domain. ATP is bound by residues 50–58 (LGRGKFAVV) and lysine 73. Aspartate 169 acts as the Proton acceptor in catalysis.

Belongs to the protein kinase superfamily. CAMK Ser/Thr protein kinase family. DAP kinase subfamily. Post-translationally, autophosphorylated. As to expression, highly expressed in bone marrow. Lower levels in brain, heart, lung, liver and kidney.

Its subcellular location is the nucleus. It carries out the reaction L-seryl-[protein] + ATP = O-phospho-L-seryl-[protein] + ADP + H(+). The enzyme catalyses L-threonyl-[protein] + ATP = O-phospho-L-threonyl-[protein] + ADP + H(+). With respect to regulation, inhibited by thiazolidinedione-type compounds: inhibited by furan- and pyridone- thiazolidinediones. Acts as a positive regulator of apoptosis. May also act as a regulator of cellular reactive oxygen species. In Oryctolagus cuniculus (Rabbit), this protein is Serine/threonine-protein kinase 17A (STK17A).